Reading from the N-terminus, the 225-residue chain is Protein-L-isoaspartate O-methyltransferase (225 aa).

The active site involves Ser75.

The protein belongs to the methyltransferase superfamily. L-isoaspartyl/D-aspartyl protein methyltransferase family.

It localises to the cytoplasm. The enzyme catalyses [protein]-L-isoaspartate + S-adenosyl-L-methionine = [protein]-L-isoaspartate alpha-methyl ester + S-adenosyl-L-homocysteine. Its function is as follows. Catalyzes the methyl esterification of L-isoaspartyl residues in peptides and proteins that result from spontaneous decomposition of normal L-aspartyl and L-asparaginyl residues. It plays a role in the repair and/or degradation of damaged proteins. In Xanthomonas campestris pv. campestris (strain 8004), this protein is Protein-L-isoaspartate O-methyltransferase.